We begin with the raw amino-acid sequence, 212 residues long: Large ribosomal subunit protein uL4 (212 aa).

This sequence belongs to the universal ribosomal protein uL4 family. As to quaternary structure, part of the 50S ribosomal subunit.

Functionally, one of the primary rRNA binding proteins, this protein initially binds near the 5'-end of the 23S rRNA. It is important during the early stages of 50S assembly. It makes multiple contacts with different domains of the 23S rRNA in the assembled 50S subunit and ribosome. Its function is as follows. Forms part of the polypeptide exit tunnel. This is Large ribosomal subunit protein uL4 from Phenylobacterium zucineum (strain HLK1).